Consider the following 1342-residue polypeptide: DNA-directed RNA polymerase subunit beta (1342 aa).

It belongs to the RNA polymerase beta chain family. As to quaternary structure, the RNAP catalytic core consists of 2 alpha, 1 beta, 1 beta' and 1 omega subunit. When a sigma factor is associated with the core the holoenzyme is formed, which can initiate transcription.

It catalyses the reaction RNA(n) + a ribonucleoside 5'-triphosphate = RNA(n+1) + diphosphate. In terms of biological role, DNA-dependent RNA polymerase catalyzes the transcription of DNA into RNA using the four ribonucleoside triphosphates as substrates. The sequence is that of DNA-directed RNA polymerase subunit beta from Vibrio vulnificus (strain CMCP6).